The following is a 140-amino-acid chain: Acyl carrier protein 1, chloroplastic (140 aa).

The transit peptide at 1–56 (MASAAAGASICIKSASFSPLAPGRISSLRSVSLPVSRKSFPSLKSSKSSFALRVSC) directs the protein to the chloroplast. Positions 60–135 (PETVAKVCGI…DAADLIEKLM (76 aa)) constitute a Carrier domain. An O-(pantetheine 4'-phosphoryl)serine modification is found at S95.

This sequence belongs to the acyl carrier protein (ACP) family. In terms of processing, 4'-phosphopantetheine is transferred from CoA to a specific serine of apo-ACP by acpS. This modification is essential for activity because fatty acids are bound in thioester linkage to the sulfhydryl of the prosthetic group.

The protein localises to the plastid. Its subcellular location is the chloroplast. It functions in the pathway lipid metabolism; fatty acid biosynthesis. Functionally, carrier of the growing fatty acid chain in fatty acid biosynthesis. The sequence is that of Acyl carrier protein 1, chloroplastic (ACL1.1) from Cuphea lanceolata (Cigar flower).